Consider the following 132-residue polypeptide: Small ribosomal subunit protein uS8 (132 aa).

The protein belongs to the universal ribosomal protein uS8 family. As to quaternary structure, part of the 30S ribosomal subunit. Contacts proteins S5 and S12.

One of the primary rRNA binding proteins, it binds directly to 16S rRNA central domain where it helps coordinate assembly of the platform of the 30S subunit. This Halothermothrix orenii (strain H 168 / OCM 544 / DSM 9562) protein is Small ribosomal subunit protein uS8.